Consider the following 473-residue polypeptide: Photosystem II CP43 reaction center protein (473 aa).

A propeptide spanning residues 1-14 (MKTLYSLRRFYHVE) is cleaved from the precursor. An N-acetylthreonine modification is found at threonine 15. At threonine 15 the chain carries Phosphothreonine. Helical transmembrane passes span 69 to 93 (LFEVAHFVPEKPMYEQGLILLPHLA), 134 to 155 (LLGPETLEESFPFFGYVWKDRN), 178 to 200 (KALYFGGVYDTWAPGGGDVRKIA), 255 to 275 (KPFAWARRAFVWSGEAYLSYS), and 291 to 312 (WFNNTAYPSEFYGPTGPEASQA). A [CaMn4O5] cluster-binding site is contributed by glutamate 367. A helical membrane pass occupies residues 447 to 471 (RARAAAAGFEKGIDRDFEPVLSMTP).

Belongs to the PsbB/PsbC family. PsbC subfamily. As to quaternary structure, PSII is composed of 1 copy each of membrane proteins PsbA, PsbB, PsbC, PsbD, PsbE, PsbF, PsbH, PsbI, PsbJ, PsbK, PsbL, PsbM, PsbT, PsbX, PsbY, PsbZ, Psb30/Ycf12, at least 3 peripheral proteins of the oxygen-evolving complex and a large number of cofactors. It forms dimeric complexes. Binds multiple chlorophylls and provides some of the ligands for the Ca-4Mn-5O cluster of the oxygen-evolving complex. It may also provide a ligand for a Cl- that is required for oxygen evolution. PSII binds additional chlorophylls, carotenoids and specific lipids. is required as a cofactor.

It is found in the plastid membrane. One of the components of the core complex of photosystem II (PSII). It binds chlorophyll and helps catalyze the primary light-induced photochemical processes of PSII. PSII is a light-driven water:plastoquinone oxidoreductase, using light energy to abstract electrons from H(2)O, generating O(2) and a proton gradient subsequently used for ATP formation. The protein is Photosystem II CP43 reaction center protein of Cuscuta exaltata (Tall dodder).